Consider the following 456-residue polypeptide: uncharacterized protein (456 aa).

The YrdC-like domain maps to 277–440 (IKNTKTIKQL…TKQLVRTTAK (164 aa)).

This is an uncharacterized protein from Mycoplasma genitalium (strain ATCC 33530 / DSM 19775 / NCTC 10195 / G37) (Mycoplasmoides genitalium).